The primary structure comprises 170 residues: Adenine phosphoribosyltransferase (170 aa).

The protein belongs to the purine/pyrimidine phosphoribosyltransferase family. In terms of assembly, homodimer.

The protein localises to the cytoplasm. It carries out the reaction AMP + diphosphate = 5-phospho-alpha-D-ribose 1-diphosphate + adenine. The protein operates within purine metabolism; AMP biosynthesis via salvage pathway; AMP from adenine: step 1/1. In terms of biological role, catalyzes a salvage reaction resulting in the formation of AMP, that is energically less costly than de novo synthesis. The chain is Adenine phosphoribosyltransferase from Geobacillus kaustophilus (strain HTA426).